Consider the following 88-residue polypeptide: UPF0335 protein WRi_003770 (88 aa).

This sequence belongs to the UPF0335 family.

The sequence is that of UPF0335 protein WRi_003770 from Wolbachia sp. subsp. Drosophila simulans (strain wRi).